We begin with the raw amino-acid sequence, 238 residues long: DNA damage-regulated autophagy modulator protein 1 (238 aa).

Transmembrane regions (helical) follow at residues 9–29, 53–73, 91–111, 116–136, 161–181, and 200–220; these read AFVPFLLVTWSSAAFIISYVV, SGIFGFMINFSAFLGAATMYT, VFNLVSLVLGLVGCFGMGIVA, LAVPVVHDGGALLAFVCGVVY, MVISAVSCAAVIPMIVCASLI, and VSAICEWTVAFGFIFYFLTFI.

Belongs to the DRAM/TMEM150 family.

It is found in the lysosome membrane. Functionally, lysosomal modulator of autophagy that plays a central role in p53/TP53-mediated apoptosis. Not involved in p73/TP73-mediated autophagy. This is DNA damage-regulated autophagy modulator protein 1 (DRAM1) from Homo sapiens (Human).